Reading from the N-terminus, the 264-residue chain is NADH-quinone oxidoreductase subunit B 1 (264 aa).

[4Fe-4S] cluster-binding residues include cysteine 42, cysteine 43, cysteine 108, and cysteine 138.

This sequence belongs to the complex I 20 kDa subunit family. NDH-1 is composed of 14 different subunits. Subunits NuoB, C, D, E, F, and G constitute the peripheral sector of the complex. The cofactor is [4Fe-4S] cluster.

The protein resides in the cell membrane. The enzyme catalyses a quinone + NADH + 5 H(+)(in) = a quinol + NAD(+) + 4 H(+)(out). NDH-1 shuttles electrons from NADH, via FMN and iron-sulfur (Fe-S) centers, to quinones in the respiratory chain. The immediate electron acceptor for the enzyme in this species is believed to be ubiquinone. Couples the redox reaction to proton translocation (for every two electrons transferred, four hydrogen ions are translocated across the cytoplasmic membrane), and thus conserves the redox energy in a proton gradient. This Chloroflexus aurantiacus (strain ATCC 29366 / DSM 635 / J-10-fl) protein is NADH-quinone oxidoreductase subunit B 1.